We begin with the raw amino-acid sequence, 569 residues long: uncharacterized protein (569 aa).

The signal sequence occupies residues 1-21 (MLCVMMLLFSAIASFPVSAQA). The Extracellular portion of the chain corresponds to 22–530 (KDQDAGILII…DHHRQTPLEK (509 aa)). A helical transmembrane segment spans residues 531 to 551 (ALWILSAVVLLFVIMFVSYTF). Residues 552 to 569 (YLRATLKKRIFKERRSLG) lie on the Cytoplasmic side of the membrane.

It is found in the cell membrane. This is an uncharacterized protein from Bacillus subtilis (strain 168).